Consider the following 126-residue polypeptide: Protein translocase subunit SecE (126 aa).

3 consecutive transmembrane segments (helical) span residues 20 to 40 (WLAA…YGEM), 42 to 62 (VVVR…VAAT), and 97 to 117 (IVLA…GIMV).

It belongs to the SecE/SEC61-gamma family. As to quaternary structure, component of the Sec protein translocase complex. Heterotrimer consisting of SecY, SecE and SecG subunits. The heterotrimers can form oligomers, although 1 heterotrimer is thought to be able to translocate proteins. Interacts with the ribosome. Interacts with SecDF, and other proteins may be involved. Interacts with SecA.

It localises to the cell inner membrane. In terms of biological role, essential subunit of the Sec protein translocation channel SecYEG. Clamps together the 2 halves of SecY. May contact the channel plug during translocation. The sequence is that of Protein translocase subunit SecE from Vibrio alginolyticus.